A 139-amino-acid chain; its full sequence is Endoribonuclease YbeY (139 aa).

Zn(2+) is bound by residues His107, His111, and Asp117.

The protein belongs to the endoribonuclease YbeY family. Zn(2+) is required as a cofactor.

The protein resides in the cytoplasm. Its function is as follows. Single strand-specific metallo-endoribonuclease involved in late-stage 70S ribosome quality control and in maturation of the 3' terminus of the 16S rRNA. The polypeptide is Endoribonuclease YbeY (Bacteroides fragilis (strain ATCC 25285 / DSM 2151 / CCUG 4856 / JCM 11019 / LMG 10263 / NCTC 9343 / Onslow / VPI 2553 / EN-2)).